A 546-amino-acid chain; its full sequence is DDB1- and CUL4-associated factor 11 (546 aa).

Over residues 1–10 (MGSRNSSSAG) the composition is skewed to polar residues. The tract at residues 1–40 (MGSRNSSSAGTGSGDPSEGLPRRGAGLRRSEEEEEEDEDV) is disordered. S73 and S75 each carry phosphoserine. The disordered stretch occupies residues 79–100 (HDSAWDGRLGDRYNPPVDATPD). The span at 80–89 (DSAWDGRLGD) shows a compositional bias: basic and acidic residues. WD repeat units lie at residues 170-210 (TYSQ…RKFK), 216-258 (DVGW…TALD), 263-302 (ERRFAVFSIAVSSDGREVLGGANDGCLYVFDREQNRRTLQ), 305-345 (SHED…EDDP), 353-392 (GHQDGITFIDSKGDARYLISNSKDQTIKLWDIRRFSSREG), 435-480 (GVLH…KKLT), and 481-520 (THKACVRDVSWHPFEEKIVSSSWDGNLRLWQYRQAEYFQD). Positions 521–546 (DMPESEEHPSTPAPMSHPSTAFSSPQ) are disordered. Residues 537-546 (HPSTAFSSPQ) are compositionally biased toward polar residues.

In terms of assembly, interacts with DDB1 and CUL4A.

The protein operates within protein modification; protein ubiquitination. Functionally, may function as a substrate receptor for CUL4-DDB1 E3 ubiquitin-protein ligase complex. The chain is DDB1- and CUL4-associated factor 11 (DCAF11) from Bos taurus (Bovine).